The chain runs to 72 residues: UPF0270 protein Ent638_3781 (72 aa).

The protein belongs to the UPF0270 family.

The chain is UPF0270 protein Ent638_3781 from Enterobacter sp. (strain 638).